A 363-amino-acid polypeptide reads, in one-letter code: Phosphoserine aminotransferase (363 aa).

Residue R42 participates in L-glutamate binding. Pyridoxal 5'-phosphate contacts are provided by residues 76 to 77, W102, T156, D175, and Q198; that span reads GR. K199 is subject to N6-(pyridoxal phosphate)lysine. 240 to 241 is a binding site for pyridoxal 5'-phosphate; sequence NT.

It belongs to the class-V pyridoxal-phosphate-dependent aminotransferase family. SerC subfamily. As to quaternary structure, homodimer. Pyridoxal 5'-phosphate serves as cofactor.

Its subcellular location is the cytoplasm. The catalysed reaction is O-phospho-L-serine + 2-oxoglutarate = 3-phosphooxypyruvate + L-glutamate. It carries out the reaction 4-(phosphooxy)-L-threonine + 2-oxoglutarate = (R)-3-hydroxy-2-oxo-4-phosphooxybutanoate + L-glutamate. The protein operates within amino-acid biosynthesis; L-serine biosynthesis; L-serine from 3-phospho-D-glycerate: step 2/3. Its pathway is cofactor biosynthesis; pyridoxine 5'-phosphate biosynthesis; pyridoxine 5'-phosphate from D-erythrose 4-phosphate: step 3/5. Catalyzes the reversible conversion of 3-phosphohydroxypyruvate to phosphoserine and of 3-hydroxy-2-oxo-4-phosphonooxybutanoate to phosphohydroxythreonine. The sequence is that of Phosphoserine aminotransferase from Shewanella baltica (strain OS185).